The primary structure comprises 178 residues: Large ribosomal subunit protein uL6 (178 aa).

It belongs to the universal ribosomal protein uL6 family. As to quaternary structure, part of the 50S ribosomal subunit.

Functionally, this protein binds to the 23S rRNA, and is important in its secondary structure. It is located near the subunit interface in the base of the L7/L12 stalk, and near the tRNA binding site of the peptidyltransferase center. This Staphylococcus epidermidis (strain ATCC 35984 / DSM 28319 / BCRC 17069 / CCUG 31568 / BM 3577 / RP62A) protein is Large ribosomal subunit protein uL6.